The sequence spans 580 residues: PTS system fructose-specific EIIB'BC component (580 aa).

2 PTS EIIB type-2 domains span residues methionine 1–alanine 99 and isoleucine 120–alanine 215. The active-site Phosphocysteine intermediate; for EIIB activity is the cysteine 126. Cysteine 126 carries the phosphocysteine; by EIIA modification. In terms of domain architecture, PTS EIIC type-2 spans alanine 243–alanine 580. 9 helical membrane-spanning segments follow: residues methionine 254–isoleucine 274, leucine 289–isoleucine 309, leucine 332–alanine 352, valine 369–glycine 389, serine 410–valine 430, alanine 451–phenylalanine 471, alanine 483–alanine 503, threonine 509–alanine 529, and histidine 549–leucine 571.

It is found in the cell inner membrane. It carries out the reaction D-fructose(out) + N(pros)-phospho-L-histidyl-[protein] = D-fructose 1-phosphate(in) + L-histidyl-[protein]. Its function is as follows. The phosphoenolpyruvate-dependent sugar phosphotransferase system (sugar PTS), a major carbohydrate active transport system, catalyzes the phosphorylation of incoming sugar substrates concomitantly with their translocation across the cell membrane. The enzyme II FruAB PTS system is involved in fructose transport. This Xanthomonas campestris pv. campestris (strain ATCC 33913 / DSM 3586 / NCPPB 528 / LMG 568 / P 25) protein is PTS system fructose-specific EIIB'BC component.